A 431-amino-acid polypeptide reads, in one-letter code: Beta-1,4-glucuronyltransferase 1 (431 aa).

At 1 to 11 (MHFSKKCSVFK) the chain is on the cytoplasmic side. A helical membrane pass occupies residues 12 to 32 (VVLSALLIVALLQLLYLSFLS). The Lumenal segment spans residues 33–431 (KLHGKQQRYK…AKYPTSPRRC (399 aa)). The N-linked (GlcNAc...) asparagine glycan is linked to Asn-216. 2 residues coordinate Mn(2+): Asp-241 and Asp-243. Asn-314 carries an N-linked (GlcNAc...) asparagine glycan.

The protein belongs to the glycosyltransferase 49 family. The cofactor is Mn(2+).

It localises to the golgi apparatus membrane. It catalyses the reaction 3-O-[beta-D-Xyl-(1-&gt;4)-Rib-ol-P-Rib-ol-P-3-beta-D-GalNAc-(1-&gt;3)-beta-D-GlcNAc-(1-&gt;4)-(O-6-P-alpha-D-Man)]-Thr-[protein] + UDP-alpha-D-glucuronate = 3-O-[beta-D-GlcA-(1-&gt;3)-beta-D-Xyl-(1-&gt;4)-Rib-ol-P-Rib-ol-P-3-beta-D-GalNAc-(1-&gt;3)-beta-D-GlcNAc-(1-&gt;4)-(O-6-P-alpha-D-Man)]-Thr-[protein] + UDP + H(+). It functions in the pathway protein modification; protein glycosylation. Functionally, beta-1,4-glucuronyltransferase involved in O-mannosylation of alpha-dystroglycan (DAG1). Transfers a glucuronic acid (GlcA) residue onto a xylose (Xyl) acceptor to produce the glucuronyl-beta-1,4-xylose-beta disaccharide primer, which is further elongated by LARGE, during synthesis of phosphorylated O-mannosyl glycan. Phosphorylated O-mannosyl glycan is a carbohydrate structure present in alpha-dystroglycan (DAG1), which is required for binding laminin G-like domain-containing extracellular proteins with high affinity. Required for axon guidance; via its function in O-mannosylation of alpha-dystroglycan (DAG1). This is Beta-1,4-glucuronyltransferase 1 from Danio rerio (Zebrafish).